The chain runs to 623 residues: Glutathione import ATP-binding protein GsiA (623 aa).

ABC transporter domains are found at residues 15-269 (VENL…RALL) and 314-564 (LRVR…RKLL). ATP contacts are provided by residues 49–56 (GESGSGKS) and 357–364 (GESGSGKS).

The protein belongs to the ABC transporter superfamily. Glutathione importer (TC 3.A.1.5.11) family. As to quaternary structure, the complex is composed of two ATP-binding proteins (GsiA), two transmembrane proteins (GsiC and GsiD) and a solute-binding protein (GsiB).

It localises to the cell inner membrane. It catalyses the reaction glutathione(out) + ATP + H2O = glutathione(in) + ADP + phosphate + H(+). In terms of biological role, part of the ABC transporter complex GsiABCD involved in glutathione import. Responsible for energy coupling to the transport system. The polypeptide is Glutathione import ATP-binding protein GsiA (Escherichia coli O157:H7).